A 241-amino-acid chain; its full sequence is Probable xyloglucan-specific endo-beta-1,4-glucanase A (241 aa).

The first 15 residues, Met1–Ala15, serve as a signal peptide directing secretion. N-linked (GlcNAc...) asparagine glycosylation occurs at Asn47.

The protein belongs to the glycosyl hydrolase 12 (cellulase H) family.

Its subcellular location is the secreted. It carries out the reaction xyloglucan + H2O = xyloglucan oligosaccharides.. In terms of biological role, catalyzes endohydrolysis of 1,4-beta-D-glucosidic linkages in xyloglucan with retention of the beta-configuration of the glycosyl residues. Specific for xyloglucan and does not hydrolyze other cell wall components. The chain is Probable xyloglucan-specific endo-beta-1,4-glucanase A (xgeA) from Aspergillus niger (strain ATCC MYA-4892 / CBS 513.88 / FGSC A1513).